The primary structure comprises 182 residues: NAD(P)H-quinone oxidoreductase subunit I, chloroplastic (182 aa).

4Fe-4S ferredoxin-type domains follow at residues 52 to 81 (GRIHFEFDKCIACEVCVRVCPINLPVVDWE) and 92 to 121 (KSYSIDFGVCIFCGNCVEYCPTNCLSMTEE). [4Fe-4S] cluster contacts are provided by Cys-61, Cys-64, Cys-67, Cys-71, Cys-101, Cys-104, Cys-107, and Cys-111.

The protein belongs to the complex I 23 kDa subunit family. As to quaternary structure, NDH is composed of at least 16 different subunits, 5 of which are encoded in the nucleus. Requires [4Fe-4S] cluster as cofactor.

The protein localises to the plastid. The protein resides in the chloroplast thylakoid membrane. The catalysed reaction is a plastoquinone + NADH + (n+1) H(+)(in) = a plastoquinol + NAD(+) + n H(+)(out). It catalyses the reaction a plastoquinone + NADPH + (n+1) H(+)(in) = a plastoquinol + NADP(+) + n H(+)(out). NDH shuttles electrons from NAD(P)H:plastoquinone, via FMN and iron-sulfur (Fe-S) centers, to quinones in the photosynthetic chain and possibly in a chloroplast respiratory chain. The immediate electron acceptor for the enzyme in this species is believed to be plastoquinone. Couples the redox reaction to proton translocation, and thus conserves the redox energy in a proton gradient. This Chaetosphaeridium globosum (Charophycean green alga) protein is NAD(P)H-quinone oxidoreductase subunit I, chloroplastic.